A 144-amino-acid chain; its full sequence is Deoxyuridine 5'-triphosphate nucleotidohydrolase (144 aa).

Residues 63–65, Asn-76, and 80–82 contribute to the substrate site; these read RSG and TID.

Belongs to the dUTPase family. Requires Mg(2+) as cofactor.

It catalyses the reaction dUTP + H2O = dUMP + diphosphate + H(+). The protein operates within pyrimidine metabolism; dUMP biosynthesis; dUMP from dCTP (dUTP route): step 2/2. Its function is as follows. This enzyme is involved in nucleotide metabolism: it produces dUMP, the immediate precursor of thymidine nucleotides and it decreases the intracellular concentration of dUTP so that uracil cannot be incorporated into DNA. In Alkaliphilus metalliredigens (strain QYMF), this protein is Deoxyuridine 5'-triphosphate nucleotidohydrolase.